A 534-amino-acid polypeptide reads, in one-letter code: Bifunctional purine biosynthesis protein PurH (534 aa).

One can recognise an MGS-like domain in the interval 6–151 (TRLPIRRALI…KNHKDVAIVV (146 aa)).

Belongs to the PurH family.

The enzyme catalyses (6R)-10-formyltetrahydrofolate + 5-amino-1-(5-phospho-beta-D-ribosyl)imidazole-4-carboxamide = 5-formamido-1-(5-phospho-D-ribosyl)imidazole-4-carboxamide + (6S)-5,6,7,8-tetrahydrofolate. The catalysed reaction is IMP + H2O = 5-formamido-1-(5-phospho-D-ribosyl)imidazole-4-carboxamide. Its pathway is purine metabolism; IMP biosynthesis via de novo pathway; 5-formamido-1-(5-phospho-D-ribosyl)imidazole-4-carboxamide from 5-amino-1-(5-phospho-D-ribosyl)imidazole-4-carboxamide (10-formyl THF route): step 1/1. The protein operates within purine metabolism; IMP biosynthesis via de novo pathway; IMP from 5-formamido-1-(5-phospho-D-ribosyl)imidazole-4-carboxamide: step 1/1. In Pseudomonas syringae pv. tomato (strain ATCC BAA-871 / DC3000), this protein is Bifunctional purine biosynthesis protein PurH.